We begin with the raw amino-acid sequence, 407 residues long: Tryptophan synthase beta chain (407 aa).

Residues 1–11 are compositionally biased toward polar residues; it reads MSTAPSQQHAS. The tract at residues 1–25 is disordered; the sequence is MSTAPSQQHASAQVPDPRGRFGDFG. Lys100 is subject to N6-(pyridoxal phosphate)lysine.

The protein belongs to the TrpB family. As to quaternary structure, tetramer of two alpha and two beta chains. Requires pyridoxal 5'-phosphate as cofactor.

The enzyme catalyses (1S,2R)-1-C-(indol-3-yl)glycerol 3-phosphate + L-serine = D-glyceraldehyde 3-phosphate + L-tryptophan + H2O. Its pathway is amino-acid biosynthesis; L-tryptophan biosynthesis; L-tryptophan from chorismate: step 5/5. Functionally, the beta subunit is responsible for the synthesis of L-tryptophan from indole and L-serine. This is Tryptophan synthase beta chain from Rhodopirellula baltica (strain DSM 10527 / NCIMB 13988 / SH1).